The following is a 77-amino-acid chain: Teretoxin Tsu15.4 (77 aa).

Positions 1–21 (MTKLTVLLLAILVLLPLATSN) are cleaved as a signal peptide. Positions 22–40 (SAADEALASLSGLLRRAKR) are excised as a propeptide.

In terms of processing, contains 4 disulfide bonds. In terms of tissue distribution, expressed by the venom duct.

The protein localises to the secreted. This Terebra subulata (Chocolate spotted auger) protein is Teretoxin Tsu15.4.